The following is a 323-amino-acid chain: Beta-ketoacyl-[acyl-carrier-protein] synthase III (323 aa).

Residues cysteine 113 and histidine 250 contribute to the active site. An ACP-binding region spans residues 251–255 (QANRR). Asparagine 280 is a catalytic residue.

It belongs to the thiolase-like superfamily. FabH family. As to quaternary structure, homodimer.

Its subcellular location is the cytoplasm. The catalysed reaction is malonyl-[ACP] + acetyl-CoA + H(+) = 3-oxobutanoyl-[ACP] + CO2 + CoA. Its pathway is lipid metabolism; fatty acid biosynthesis. Functionally, catalyzes the condensation reaction of fatty acid synthesis by the addition to an acyl acceptor of two carbons from malonyl-ACP. Catalyzes the first condensation reaction which initiates fatty acid synthesis and may therefore play a role in governing the total rate of fatty acid production. Possesses both acetoacetyl-ACP synthase and acetyl transacylase activities. Its substrate specificity determines the biosynthesis of branched-chain and/or straight-chain of fatty acids. The chain is Beta-ketoacyl-[acyl-carrier-protein] synthase III from Rhizobium johnstonii (strain DSM 114642 / LMG 32736 / 3841) (Rhizobium leguminosarum bv. viciae).